Reading from the N-terminus, the 536-residue chain is MTKYIFVTGGVVSSIGKGIVAASLGRLLKNRGLKVTIQKFDPYINIDPGTMSPYQHGEVYVTDDGAETDLDLGHYERFIDINLNKYSNVTTGKIYSEVLRKERKGEYLGATVQVIPHITDALKEKIKRAATTTDSDVIITEVGGTVGDIESLPFLEALRQMKADVGADNVMYIHTTLLPYLKAAGEMKTKPTQHSVKELRGLGIQPNMLVIRTEQPAGQGIKNKLAQFCDVAPEAVIESLDVDHLYQIPLNLQAQNMDQIVCDHLKLDVPVADMTEWSAMVDKVMNLKKKTKIALVGKYVELPDAYLSVVEALKHSGYVNDTAIDLNWINANEVTPETVTDLLGDADGIIVPGGFGHRGTEGKIEAIRYARENDVPMLGICLGMQLTCVEYARHVLNLEGANSAELDPDTKYPVIDIMRDQIDIEDMGGTLRLGLYPCKLKSGSKTASAYSNQEVVQRRHRHRYEFNNAFRQQFEEAGFVFSGVSPDNRLVEVVELSDKKFFVAAQYHPELQSRPNRPEELYTAFITAAVENSQAH.

An amidoligase domain region spans residues 1-267; the sequence is MTKYIFVTGG…DQIVCDHLKL (267 aa). A CTP-binding site is contributed by serine 13. Residue serine 13 coordinates UTP. 14-19 serves as a coordination point for ATP; sequence SIGKGI. Tyrosine 54 provides a ligand contact to L-glutamine. Aspartate 71 lines the ATP pocket. Aspartate 71 and glutamate 141 together coordinate Mg(2+). CTP contacts are provided by residues 148 to 150, 188 to 193, and lysine 224; these read DIE and KTKPTQ. UTP contacts are provided by residues 188 to 193 and lysine 224; that span reads KTKPTQ. In terms of domain architecture, Glutamine amidotransferase type-1 spans 292–535; sequence KIALVGKYVE…ITAAVENSQA (244 aa). Glycine 354 lines the L-glutamine pocket. Cysteine 381 functions as the Nucleophile; for glutamine hydrolysis in the catalytic mechanism. Residues 382-385, glutamate 405, and arginine 463 contribute to the L-glutamine site; that span reads LGMQ. Active-site residues include histidine 508 and glutamate 510.

The protein belongs to the CTP synthase family. In terms of assembly, homotetramer.

It catalyses the reaction UTP + L-glutamine + ATP + H2O = CTP + L-glutamate + ADP + phosphate + 2 H(+). The enzyme catalyses L-glutamine + H2O = L-glutamate + NH4(+). The catalysed reaction is UTP + NH4(+) + ATP = CTP + ADP + phosphate + 2 H(+). It participates in pyrimidine metabolism; CTP biosynthesis via de novo pathway; CTP from UDP: step 2/2. Its activity is regulated as follows. Allosterically activated by GTP, when glutamine is the substrate; GTP has no effect on the reaction when ammonia is the substrate. The allosteric effector GTP functions by stabilizing the protein conformation that binds the tetrahedral intermediate(s) formed during glutamine hydrolysis. Inhibited by the product CTP, via allosteric rather than competitive inhibition. Functionally, catalyzes the ATP-dependent amination of UTP to CTP with either L-glutamine or ammonia as the source of nitrogen. Regulates intracellular CTP levels through interactions with the four ribonucleotide triphosphates. The protein is CTP synthase of Streptococcus mutans serotype c (strain ATCC 700610 / UA159).